The sequence spans 555 residues: Transmembrane protein 87A (555 aa).

Residues 1–21 (MAAAAWLQVLPVILLLLGAHP) form the signal peptide. Residues 22-225 (SPLSFFSAGP…YEYLTLEDYP (204 aa)) are Lumenal-facing. 2 cysteine pairs are disulfide-bonded: cysteine 74-cysteine 128 and cysteine 89-cysteine 431. 4 N-linked (GlcNAc...) asparagine glycosylation sites follow: asparagine 79, asparagine 127, asparagine 157, and asparagine 160. A helical membrane pass occupies residues 226-246 (LMIFFMVMCIVYVLFGVLWLA). At 247 to 257 (WSACYWRDLLR) the chain is on the cytoplasmic side. A helical transmembrane segment spans residues 258–278 (IQFWIGAVIFLGMLEKAVFYA). Over 279–305 (EFQNIRYKGESVQGALILAELLSAVKR) the chain is Lumenal. A helical transmembrane segment spans residues 306 to 322 (SLARTLVIIVSLGYGIV). At 323–325 (KPR) the chain is on the cytoplasmic side. A helical transmembrane segment spans residues 326-346 (LGVTLHKVVVAGALYLLFSGM). Topologically, residues 347 to 361 (EGVLRVTGAQTDLAS) are lumenal. The chain crosses the membrane as a helical span at residues 362–382 (LAFIPLAFLDTALCWWIFISL). Topologically, residues 383-403 (TQTMKLLKLRRNIVKLSLYRH) are cytoplasmic. Residues 404-424 (FTNTLILAVAASIVFIIWTTM) form a helical membrane-spanning segment. Topologically, residues 425–437 (KFRIVTCQSDWRE) are lumenal. A helical membrane pass occupies residues 438-458 (LWVDDAIWRLLFSMILFVIMV). The Cytoplasmic portion of the chain corresponds to 459 to 555 (LWRPSANNQR…ITHFERSKME (97 aa)). The tract at residues 473-516 (PLSEEEEEDEQKEPMLKESFEGMKMRSTKQEPNGNSKVNKAQED) is disordered. The segment covering 484–496 (KEPMLKESFEGMK) has biased composition (basic and acidic residues). Residues 502 to 511 (QEPNGNSKVN) are compositionally biased toward polar residues. Serine 540 bears the Phosphoserine mark.

It belongs to the LU7TM family. TMEM87 subfamily. May interact with STOML3; STOML3 potentiates the mechanosensitive ion channel activity associated with TMEM87A.

Its subcellular location is the cell membrane. It is found in the golgi apparatus membrane. The protein localises to the cell projection. The protein resides in the ruffle. Potential monoatomic ion channel gated by mechanical force, implicated in normal touch sensitivity through the generation of mechanically activated currents. However, a direct channel activity is debated and an alternative could be that it functions as a chaperone for an unidentified mechanosensitive ion channel. Could also be involved in cell mechanosensitivity regulating cell adhesion and migration. May also be involved in retrograde transport from endosomes to the trans-Golgi network (TGN). This chain is Transmembrane protein 87A, found in Homo sapiens (Human).